The chain runs to 304 residues: Cbb3-type cytochrome c oxidase subunit CcoP (304 aa).

2 helical membrane passes run 11–31 (LYVA…LIVA) and 61–81 (WWAG…ALYP). 2 consecutive Cytochrome c domains span residues 129 to 209 (QAMA…LSLS) and 216 to 296 (VAAQ…WSLS). Residues Cys-142, Cys-145, His-146, Met-185, Cys-228, Cys-231, His-232, and Met-273 each contribute to the heme c site.

This sequence belongs to the CcoP / FixP family. As to quaternary structure, component of the cbb3-type cytochrome c oxidase at least composed of CcoN, CcoO, CcoQ and CcoP. It depends on heme c as a cofactor.

The protein localises to the cell inner membrane. The protein operates within energy metabolism; oxidative phosphorylation. Functionally, C-type cytochrome. Part of the cbb3-type cytochrome c oxidase complex. CcoP subunit is required for transferring electrons from donor cytochrome c via its heme groups to CcoO subunit. From there, electrons are shuttled to the catalytic binuclear center of CcoN subunit where oxygen reduction takes place. The complex also functions as a proton pump. This Rubrivivax gelatinosus (Rhodocyclus gelatinosus) protein is Cbb3-type cytochrome c oxidase subunit CcoP.